A 472-amino-acid chain; its full sequence is tRNA-2-methylthio-N(6)-dimethylallyladenosine synthase (472 aa).

Positions Met-1–Gly-24 are disordered. The MTTase N-terminal domain occupies Gly-33–Glu-150. [4Fe-4S] cluster is bound by residues Cys-42, Cys-79, Cys-113, Cys-187, Cys-191, and Cys-194. The Radical SAM core domain occupies Arg-173–Ser-407. One can recognise a TRAM domain in the interval Glu-408–Ala-471.

It belongs to the methylthiotransferase family. MiaB subfamily. In terms of assembly, monomer. The cofactor is [4Fe-4S] cluster.

Its subcellular location is the cytoplasm. The enzyme catalyses N(6)-dimethylallyladenosine(37) in tRNA + (sulfur carrier)-SH + AH2 + 2 S-adenosyl-L-methionine = 2-methylsulfanyl-N(6)-dimethylallyladenosine(37) in tRNA + (sulfur carrier)-H + 5'-deoxyadenosine + L-methionine + A + S-adenosyl-L-homocysteine + 2 H(+). Its function is as follows. Catalyzes the methylthiolation of N6-(dimethylallyl)adenosine (i(6)A), leading to the formation of 2-methylthio-N6-(dimethylallyl)adenosine (ms(2)i(6)A) at position 37 in tRNAs that read codons beginning with uridine. This is tRNA-2-methylthio-N(6)-dimethylallyladenosine synthase from Stenotrophomonas maltophilia (strain K279a).